Reading from the N-terminus, the 127-residue chain is MAIVGLGTDIVEIERITAHVARSGDKLAKRVLTDAEFDIYQQHSQPSRYLAKRFAAKEAAAKALGTGIGRGVSFQHIHIGNTPDGAPTIDFTEGAQQRLALLNGVVGHISIADEKSYAIATVILESR.

Mg(2+)-binding residues include Asp-9 and Glu-58.

This sequence belongs to the P-Pant transferase superfamily. AcpS family. It depends on Mg(2+) as a cofactor.

It is found in the cytoplasm. The enzyme catalyses apo-[ACP] + CoA = holo-[ACP] + adenosine 3',5'-bisphosphate + H(+). In terms of biological role, transfers the 4'-phosphopantetheine moiety from coenzyme A to a Ser of acyl-carrier-protein. This is Holo-[acyl-carrier-protein] synthase from Shewanella sp. (strain ANA-3).